The following is a 245-amino-acid chain: Vacuolar iron transporter (245 aa).

At M1–D28 the chain is on the cytoplasmic side. Residues I29–G49 traverse the membrane as a helical segment. Over A50–S55 the chain is Vacuolar. A helical transmembrane segment spans residues I56 to G76. At Y77–T162 the chain is on the cytoplasmic side. Residues E94, E97, E105, E108, M141, and E145 each coordinate Fe cation. Residues I163 to I183 traverse the membrane as a helical segment. Residues A184 to K186 lie on the Vacuolar side of the membrane. Residues A187–G207 traverse the membrane as a helical segment. At Y208–P214 the chain is on the cytoplasmic side. A helical membrane pass occupies residues V215–M235. Over A236–E245 the chain is Vacuolar.

The protein belongs to the CCC1 family. In terms of tissue distribution, expressed in petal tissues, but not in other parts of the plant, such as leaves, roots, sepals and stems.

Its subcellular location is the vacuole membrane. The enzyme catalyses Fe(2+)(in) = Fe(2+)(out). Functionally, vacuolar iron transporter involved in the transfer of iron ions from the cytosol to the vacuole for intracellular iron storage. Plays an essential role in the development of blue coloration in cornflower petals. This is Vacuolar iron transporter from Centaurea cyanus (Garden cornflower).